Reading from the N-terminus, the 742-residue chain is Zinc finger protein 280C (742 aa).

Glycyl lysine isopeptide (Lys-Gly) (interchain with G-Cter in SUMO2) cross-links involve residues Lys10, Lys23, Lys42, Lys65, Lys85, Lys123, and Lys135. Residues 138–168 (FTKTSPQEDSGACSVSQSDSTQDIPSSNILQ) show a composition bias toward polar residues. A disordered region spans residues 138 to 243 (FTKTSPQEDS…QSAPGSSSLR (106 aa)). Residues Lys180, Lys186, and Lys193 each participate in a glycyl lysine isopeptide (Lys-Gly) (interchain with G-Cter in SUMO2) cross-link. The segment covering 182–191 (PSTSKVNSVN) has biased composition (polar residues). Over residues 200-222 (SISETRPCSSSSSQTAPSGASSQ) the composition is skewed to low complexity. Over residues 223 to 243 (TVLSNVNTSSVQSAPGSSSLR) the composition is skewed to polar residues. 5 C2H2-type zinc fingers span residues 323-345 (FKCF…MKHH), 360-383 (TTCQ…ESTH), 390-413 (TICK…KDTH), 420-443 (YICQ…RSSH), and 477-499 (YRCP…KLEH). Residues 523-578 (LGSSQSRASSPPSSTIPSTSLQLSVPKSKSTTTKNNSKVSANKATTTSPQTVATTT) are compositionally biased toward low complexity. The tract at residues 523 to 608 (LGSSQSRASS…YKQKRQRTRK (86 aa)) is disordered. Residues 579 to 592 (GKPSASKPGTGTTK) are compositionally biased toward polar residues. A Glycyl lysine isopeptide (Lys-Gly) (interchain with G-Cter in SUMO2) cross-link involves residue Lys580. A compositionally biased stretch (basic residues) spans 593–608 (SKAKPSYKQKRQRTRK).

It is found in the nucleus. Its function is as follows. May function as a transcription factor. The chain is Zinc finger protein 280C (Znf280c) from Mus musculus (Mouse).